We begin with the raw amino-acid sequence, 368 residues long: Proline-rich protein 5-like (368 aa).

S28 carries the post-translational modification Phosphoserine. The disordered stretch occupies residues 327 to 368; that stretch reads PSFPPPHRQCSSEPNITDNPDGLEEGARGSQEGSELNCASLS. 2 stretches are compositionally biased toward polar residues: residues 335–344 and 357–368; these read QCSSEPNITD and QEGSELNCASLS.

The protein belongs to the PROTOR family. As to quaternary structure, interacts with the mammalian target of rapamycin complex 2 (mTORC2) which contains MTOR, MLST8, PRR5, RICTOR, MAPKAP1 and DEPTOR. Interacts with RFFL. Interacts (via C-terminus) with ZFP36 (via C-terminus); this interaction may accelerate ZFP36-mediated mRNA decay during stress. Interacts with RICTOR. In terms of processing, ubiquitinated. Ubiquitination by RFFL promotes proteasomal degradation of PRR5L thereby modifying the substrate-specific activity of the mTORC2 complex. Ubiquitination by RFFL is stimulated by LPA/lysophosphatidic acid.

Its function is as follows. Associates with the mTORC2 complex that regulates cellular processes including survival and organization of the cytoskeleton. Regulates the activity of the mTORC2 complex in a substrate-specific manner preventing for instance the specific phosphorylation of PKCs and thereby controlling cell migration. Plays a role in the stimulation of ZFP36-mediated mRNA decay of several ZFP36-associated mRNAs, such as TNF-alpha and GM-CSF, in response to stress. Required for ZFP36 localization to cytoplasmic stress granule (SG) and P-body (PB) in response to stress. The sequence is that of Proline-rich protein 5-like (PRR5L) from Homo sapiens (Human).